The primary structure comprises 1241 residues: uncharacterized protein (1241 aa).

Residues 21–49 (ILNDNVREINIAKKEIKQLREYVGILQQN) are a coiled coil. 3 helical membrane passes run 261–281 (VNAIITGLLSRMMMVTNFVLG), 918–938 (AVVGMFFPIIGASIEVLGLVA), and 947–967 (GHIVNGSLELTLAGVATVIGG). The disordered stretch occupies residues 1005–1028 (THIGKEDSNNGVSTSTNKRSIGKA). The segment covering 1013-1028 (NNGVSTSTNKRSIGKA) has biased composition (polar residues).

Its subcellular location is the host membrane. This is an uncharacterized protein from Diadromus pulchellus (Parasitic wasp).